A 360-amino-acid polypeptide reads, in one-letter code: Photosystem II protein D1 (360 aa).

Transmembrane regions (helical) follow at residues 29-46 (YIGW…TAAS), 118-133 (HFLI…EWEL), and 142-156 (WIFV…AASA). Histidine 118 contacts chlorophyll a. Position 126 (tryptophan 126) interacts with pheophytin a. [CaMn4O5] cluster is bound by residues aspartate 170 and glutamate 189. A helical membrane pass occupies residues 197 to 218 (FHMAGVAGVFGGSLFSAMHGSL). A chlorophyll a-binding site is contributed by histidine 198. A quinone contacts are provided by residues histidine 215 and 264–265 (SF). Fe cation is bound at residue histidine 215. Histidine 272 lines the Fe cation pocket. Residues 274–288 (FLAAWPVVGIWLTAL) form a helical membrane-spanning segment. [CaMn4O5] cluster is bound by residues histidine 332, glutamate 333, aspartate 342, and alanine 344. Positions 345 to 360 (SNEILPVAISAPSVVG) are excised as a propeptide.

It belongs to the reaction center PufL/M/PsbA/D family. In terms of assembly, PSII is composed of 1 copy each of membrane proteins PsbA, PsbB, PsbC, PsbD, PsbE, PsbF, PsbH, PsbI, PsbJ, PsbK, PsbL, PsbM, PsbT, PsbX, PsbY, PsbZ, Psb30/Ycf12, at least 3 peripheral proteins of the oxygen-evolving complex and a large number of cofactors. It forms dimeric complexes. The D1/D2 heterodimer binds P680, chlorophylls that are the primary electron donor of PSII, and subsequent electron acceptors. It shares a non-heme iron and each subunit binds pheophytin, quinone, additional chlorophylls, carotenoids and lipids. D1 provides most of the ligands for the Mn4-Ca-O5 cluster of the oxygen-evolving complex (OEC). There is also a Cl(-1) ion associated with D1 and D2, which is required for oxygen evolution. The PSII complex binds additional chlorophylls, carotenoids and specific lipids. is required as a cofactor. In terms of processing, tyr-161 forms a radical intermediate that is referred to as redox-active TyrZ, YZ or Y-Z. C-terminally processed by CTPA; processing is essential to allow assembly of the oxygen-evolving complex and thus photosynthetic growth.

The protein localises to the plastid. Its subcellular location is the chloroplast thylakoid membrane. It catalyses the reaction 2 a plastoquinone + 4 hnu + 2 H2O = 2 a plastoquinol + O2. Photosystem II (PSII) is a light-driven water:plastoquinone oxidoreductase that uses light energy to abstract electrons from H(2)O, generating O(2) and a proton gradient subsequently used for ATP formation. It consists of a core antenna complex that captures photons, and an electron transfer chain that converts photonic excitation into a charge separation. The D1/D2 (PsbA/PsbD) reaction center heterodimer binds P680, the primary electron donor of PSII as well as several subsequent electron acceptors. The sequence is that of Photosystem II protein D1 from Ectocarpus siliculosus (Brown alga).